We begin with the raw amino-acid sequence, 113 residues long: MHEMALCEGIVEIVEAEARKGAFSKVKTVWLEIGALSHVAPEALRFCFEAVTAHTIARGAALEIIEQKGSAWCLGCSRSVEISRRYDACSECGSHQLQVTGGEDMRVKELEVE.

Residue His-2 coordinates Ni(2+). 4 residues coordinate Zn(2+): Cys-73, Cys-76, Cys-89, and Cys-92.

The protein belongs to the HypA/HybF family.

In terms of biological role, involved in the maturation of [NiFe] hydrogenases. Required for nickel insertion into the metal center of the hydrogenase. The chain is Hydrogenase maturation factor HypA from Bradyrhizobium sp. (strain ORS 278).